A 308-amino-acid polypeptide reads, in one-letter code: Ribosomal RNA small subunit methyltransferase H (308 aa).

Residues 34 to 36 (GGH), Asp54, Phe85, Asp99, and Gln106 each bind S-adenosyl-L-methionine.

The protein belongs to the methyltransferase superfamily. RsmH family.

The protein resides in the cytoplasm. It carries out the reaction cytidine(1402) in 16S rRNA + S-adenosyl-L-methionine = N(4)-methylcytidine(1402) in 16S rRNA + S-adenosyl-L-homocysteine + H(+). Its function is as follows. Specifically methylates the N4 position of cytidine in position 1402 (C1402) of 16S rRNA. The protein is Ribosomal RNA small subunit methyltransferase H of Dichelobacter nodosus (strain VCS1703A).